A 69-amino-acid polypeptide reads, in one-letter code: NIQKESTLHLVLRLRGGIIEPSLRQLAQKYNCDKMICRKCYARLHPRAVNCRKKKCGHTNNLRPKKKVK.

A Ubiquitin-like domain is found at 1–17 (NIQKESTLHLVLRLRGG). Lys-4 is covalently cross-linked (Glycyl lysine isopeptide (Lys-Gly) (interchain with G-Cter in ubiquitin)). Gly-17 participates in a covalent cross-link: Glycyl lysine isopeptide (Gly-Lys) (interchain with K-? in acceptor proteins). Lys-39 bears the N6,N6,N6-trimethyllysine mark.

The protein in the N-terminal section; belongs to the ubiquitin family. In the C-terminal section; belongs to the eukaryotic ribosomal protein eL40 family. Part of the 60S ribosomal subunit. In terms of processing, trimethylation of Lys-39 ('Lys-22' of the mature chain) by SMYD5 promotes translation elongation and protein synthesis.

The protein localises to the cytoplasm. The protein resides in the nucleus. Exists either covalently attached to another protein, or free (unanchored). When covalently bound, it is conjugated to target proteins via an isopeptide bond either as a monomer (monoubiquitin), a polymer linked via different Lys residues of the ubiquitin (polyubiquitin chains) or a linear polymer linked via the initiator Met of the ubiquitin (linear polyubiquitin chains). Polyubiquitin chains, when attached to a target protein, have different functions depending on the Lys residue of the ubiquitin that is linked: Lys-6-linked may be involved in DNA repair; Lys-11-linked is involved in ERAD (endoplasmic reticulum-associated degradation) and in cell-cycle regulation; Lys-29-linked is involved in proteotoxic stress response and cell cycle; Lys-33-linked is involved in kinase modification; Lys-48-linked is involved in protein degradation via the proteasome; Lys-63-linked is involved in endocytosis, DNA-damage responses as well as in signaling processes leading to activation of the transcription factor NF-kappa-B. Linear polymer chains formed via attachment by the initiator Met lead to cell signaling. Ubiquitin is usually conjugated to Lys residues of target proteins, however, in rare cases, conjugation to Cys or Ser residues has been observed. When polyubiquitin is free (unanchored-polyubiquitin), it also has distinct roles, such as in activation of protein kinases, and in signaling. In terms of biological role, component of the 60S subunit of the ribosome. The polypeptide is Ubiquitin-ribosomal protein eL40 fusion protein (UBA52) (Gallus gallus (Chicken)).